Consider the following 383-residue polypeptide: Acetylornithine deacetylase (383 aa).

His-80 contributes to the Zn(2+) binding site. The active site involves Asp-82. Asp-112 contacts Zn(2+). The active site involves Glu-144. Zn(2+) contacts are provided by Glu-145, Glu-169, and His-355.

This sequence belongs to the peptidase M20A family. ArgE subfamily. Homodimer. Zn(2+) is required as a cofactor. Co(2+) serves as cofactor. Requires glutathione as cofactor.

It is found in the cytoplasm. The catalysed reaction is N(2)-acetyl-L-ornithine + H2O = L-ornithine + acetate. The protein operates within amino-acid biosynthesis; L-arginine biosynthesis; L-ornithine from N(2)-acetyl-L-ornithine (linear): step 1/1. Its function is as follows. Catalyzes the hydrolysis of the amide bond of N(2)-acetylated L-amino acids. Cleaves the acetyl group from N-acetyl-L-ornithine to form L-ornithine, an intermediate in L-arginine biosynthesis pathway, and a branchpoint in the synthesis of polyamines. The polypeptide is Acetylornithine deacetylase (Escherichia coli O139:H28 (strain E24377A / ETEC)).